A 221-amino-acid polypeptide reads, in one-letter code: MAGEQNIKYFNIKGRMEAIRWLLAVAGVEFEEKFFETKEQLQKLKETVLLFQQVPMVEIDGMKLVQTRAILHYIAEKYNLLGKDMKEHAQIIMYSEGTMDLMELIMIYPFLKGEEKKQRLVEIANKAKGRYFPAFENVLKTHGQNFLVGNQLSMADVQLFEAILMVEEKVPDALSGFPLLQAFKTRISNIPTVKTFLAPGSKRKPVPDAKYVEDIIKIFYF.

Position 1 is an N-acetylmethionine (M1). Position 2 is an N-acetylalanine; in Glutathione S-transferase, N-terminally processed (A2). Positions 3-82 (GEQNIKYFNI…YIAEKYNLLG (80 aa)) constitute a GST N-terminal domain. Glutathione is bound by residues Y9, K45, 53-54 (QV), and 66-67 (QT). In terms of domain architecture, GST C-terminal spans 84–208 (DMKEHAQIIM…PGSKRKPVPD (125 aa)).

Belongs to the GST superfamily. Alpha family. Homodimer or heterodimer of GSTA1 and GSTA2.

Its subcellular location is the cytoplasm. The catalysed reaction is RX + glutathione = an S-substituted glutathione + a halide anion + H(+). It catalyses the reaction prostaglandin A2 + glutathione = prostaglandin A2-S-(R)-glutathione. It carries out the reaction prostaglandin J2 + glutathione = prostaglandin J2-S-(R)-glutathione. The enzyme catalyses (13S)-hydroperoxy-(9Z,11E)-octadecadienoate + 2 glutathione = (13S)-hydroxy-(9Z,11E)-octadecadienoate + glutathione disulfide + H2O. The catalysed reaction is androst-5-ene-3,17-dione = androst-4-ene-3,17-dione. In terms of biological role, glutathione S-transferase that catalyzes the nucleophilic attack of the sulfur atom of glutathione on the electrophilic groups of a wide range of exogenous and endogenous compounds. Involved in the formation of glutathione conjugates of both prostaglandin A2 (PGA2) and prostaglandin J2 (PGJ2). It also catalyzes the isomerization of D5-androstene-3,17-dione (AD) into D4-androstene-3,17-dione and may therefore play an important role in hormone biosynthesis. Through its glutathione-dependent peroxidase activity toward the fatty acid hydroperoxide (13S)-hydroperoxy-(9Z,11E)-octadecadienoate/13-HPODE it is also involved in the metabolism of oxidized linoleic acid. The protein is Glutathione S-transferase of Antechinus stuartii (Brown marsupial mouse).